The following is a 302-amino-acid chain: tRNA dimethylallyltransferase (302 aa).

ATP is bound at residue 9-16 (GPTAAGKS). 11–16 (TAAGKS) contacts substrate. The interval 34 to 37 (DSRQ) is interaction with substrate tRNA.

The protein belongs to the IPP transferase family. In terms of assembly, monomer. It depends on Mg(2+) as a cofactor.

The catalysed reaction is adenosine(37) in tRNA + dimethylallyl diphosphate = N(6)-dimethylallyladenosine(37) in tRNA + diphosphate. Functionally, catalyzes the transfer of a dimethylallyl group onto the adenine at position 37 in tRNAs that read codons beginning with uridine, leading to the formation of N6-(dimethylallyl)adenosine (i(6)A). The sequence is that of tRNA dimethylallyltransferase from Gloeobacter violaceus (strain ATCC 29082 / PCC 7421).